Consider the following 808-residue polypeptide: Ribosome biogenesis protein BOP1 homolog (808 aa).

Residues 1 to 56 (MTSPKGKPSPKRSAPAPTTAALTPRTEERTEGATSSASASASSHISSSFDSPRDDT) form a disordered region. 2 stretches are compositionally biased toward low complexity: residues 12-24 (RSAP…ALTP) and 33-50 (ATSS…SSFD). WD repeat units follow at residues 430-469 (GHTA…LMKR), 640-680 (KFSE…RRFK), 682-720 (SGGV…KPYK), 724-766 (SHRG…DYNK), and 777-808 (KHQR…AWTE).

It belongs to the WD repeat BOP1/ERB1 family.

The protein resides in the nucleus. The protein localises to the nucleolus. It localises to the nucleoplasm. In terms of biological role, required for maturation of ribosomal RNAs and formation of the large ribosomal subunit. The polypeptide is Ribosome biogenesis protein BOP1 homolog (Leishmania infantum).